The sequence spans 276 residues: Aldo-keto reductase Mkms_1985 (276 aa).

Tyr-50 (proton donor) is an active-site residue. Residues Leu-190, Ile-228, Lys-230, Ser-231, Val-232, Arg-236, Ser-239, and Asn-240 each coordinate NADPH. The segment at 257 to 276 (SSLEDGSRLGPDPKTFNFTG) is disordered.

Belongs to the aldo/keto reductase family.

This chain is Aldo-keto reductase Mkms_1985, found in Mycobacterium sp. (strain KMS).